Here is a 128-residue protein sequence, read N- to C-terminus: UPF0325 protein KPN78578_01770 (128 aa).

This sequence belongs to the UPF0325 family.

The polypeptide is UPF0325 protein KPN78578_01770 (Klebsiella pneumoniae subsp. pneumoniae (strain ATCC 700721 / MGH 78578)).